The following is a 439-amino-acid chain: Chitinase-like protein Idgf1 (439 aa).

A signal peptide spans 1–20 (MRFQLFYILGLLSVTSLTQA). The GH18 domain maps to 22-439 (NNLVCYYDST…IVRSIKYFMG (418 aa)). Cysteines 26 and 53 form a disulfide. 3 N-linked (GlcNAc...) asparagine glycosylation sites follow: N122, N218, and N346. C340 and C423 form a disulfide bridge.

The protein belongs to the glycosyl hydrolase 18 family. IDGF subfamily. In terms of processing, glycosylated.

The protein localises to the secreted. Its function is as follows. Cooperates with insulin-like peptides to stimulate the proliferation, polarization and motility of imaginal disk cells. May act by stabilizing the binding of insulin-like peptides to its receptor through a simultaneous interaction with both molecules to form a multiprotein signaling complex. The chain is Chitinase-like protein Idgf1 (Idgf1) from Drosophila simulans (Fruit fly).